The following is a 325-amino-acid chain: Biotin synthase (325 aa).

In terms of domain architecture, Radical SAM core spans 42-270; the sequence is YKVQLASLLS…QSRVRLSAGR (229 aa). Cysteine 57, cysteine 61, and cysteine 64 together coordinate [4Fe-4S] cluster. The [2Fe-2S] cluster site is built by cysteine 101, cysteine 133, cysteine 193, and arginine 265.

This sequence belongs to the radical SAM superfamily. Biotin synthase family. Homodimer. The cofactor is [4Fe-4S] cluster. Requires [2Fe-2S] cluster as cofactor.

The catalysed reaction is (4R,5S)-dethiobiotin + (sulfur carrier)-SH + 2 reduced [2Fe-2S]-[ferredoxin] + 2 S-adenosyl-L-methionine = (sulfur carrier)-H + biotin + 2 5'-deoxyadenosine + 2 L-methionine + 2 oxidized [2Fe-2S]-[ferredoxin]. It participates in cofactor biosynthesis; biotin biosynthesis; biotin from 7,8-diaminononanoate: step 2/2. Functionally, catalyzes the conversion of dethiobiotin (DTB) to biotin by the insertion of a sulfur atom into dethiobiotin via a radical-based mechanism. The chain is Biotin synthase from Synechococcus sp. (strain WH7803).